The chain runs to 401 residues: N-acetyllactosaminide beta-1,6-N-acetylglucosaminyl-transferase (401 aa).

Topologically, residues 1–7 (MPPSVRY) are cytoplasmic. Residues 8 to 28 (FFIVSVTTVIVFIVLYVLSFG) form a helical; Signal-anchor for type II membrane protein membrane-spanning segment. Residues 29–401 (GDQSYQKLNI…EIAIQPSWYF (373 aa)) are Lumenal-facing. Residues Asn37, Asn255, Asn315, and Asn389 are each glycosylated (N-linked (GlcNAc...) asparagine).

Belongs to the glycosyltransferase 14 family.

It is found in the golgi apparatus membrane. The catalysed reaction is a beta-D-Gal-(1-&gt;4)-beta-D-GlcNAc-(1-&gt;3)-beta-D-Gal-(1-&gt;4)-beta-D-GlcNAc derivative + UDP-N-acetyl-alpha-D-glucosamine = a beta-D-Gal-(1-&gt;4)-beta-D-GlcNAc-(1-&gt;3)-[beta-D-GlcNAc-(1-&gt;6)]-beta-D-Gal-(1-&gt;4)-N-acetyl-beta-D-glucosaminyl derivative + UDP + H(+). The protein operates within protein modification; protein glycosylation. Functionally, branching enzyme that converts linear into branched poly-N-acetyllactosaminoglycans. Introduces the blood group I antigen during embryonic development. It is closely associated with the development and maturation of erythroid cells. This chain is N-acetyllactosaminide beta-1,6-N-acetylglucosaminyl-transferase (Gcnt2), found in Mus musculus (Mouse).